The following is a 509-amino-acid chain: Scavenger receptor class B member 1 (509 aa).

Over methionine 1–alanine 11 the chain is Cytoplasmic. The chain crosses the membrane as a helical span at residues leucine 12–valine 32. The Extracellular portion of the chain corresponds to proline 33–valine 440. Residues asparagine 102, asparagine 108, asparagine 116, asparagine 173, asparagine 212, asparagine 227, asparagine 255, asparagine 288, asparagine 310, asparagine 330, and asparagine 383 are each glycosylated (N-linked (GlcNAc...) asparagine). A disulfide bridge links cysteine 251 with cysteine 384. Residues leucine 441–isoleucine 461 traverse the membrane as a helical segment. A lipid anchor (S-palmitoyl cysteine) is attached at cysteine 462. Topologically, residues cysteine 462–leucine 509 are cytoplasmic.

Belongs to the CD36 family. As to quaternary structure, the C-terminal region binds to PDZK1. In terms of processing, N-glycosylated. Post-translationally, the six cysteines of the extracellular domain are all involved in intramolecular disulfide bonds. As to expression, expressed primarily in liver, ovary and adrenal gland, and, at lower levels in other non-placental steroidogenic tissues, including adipose tissue, mammary gland and testis (at protein level). Isoform 2 is expressed at lower levels than isoform 1 in liver, testis and adrenal gland. At the mRNA, but not at the protein level, isoform 2 is the predominant isoform in testis (80%).

It localises to the cell membrane. The protein resides in the membrane. The protein localises to the caveola. Its function is as follows. Receptor for different ligands such as phospholipids, cholesterol ester, lipoproteins, phosphatidylserine and apoptotic cells. Both isoform 1 and isoform 2 act as receptors for HDL, mediating selective uptake of cholesteryl ether and HDL-dependent cholesterol efflux. Also facilitates the flux of free and esterified cholesterol between the cell surface and apoB-containing lipoproteins and modified lipoproteins, although less efficiently than HDL. May be involved in the phagocytosis of apoptotic cells, via its phosphatidylserine binding activity. The chain is Scavenger receptor class B member 1 (Scarb1) from Mus musculus (Mouse).